Reading from the N-terminus, the 803-residue chain is Translation initiation factor IF-2 (803 aa).

Disordered regions lie at residues 93–123 and 138–206; these read TKPV…LNEK and EVKE…ASAK. Residues 111–121 show a composition bias toward polar residues; it reads VPPTSDTTNLN. A compositionally biased stretch (basic and acidic residues) spans 138–155; it reads EVKEEAKKTPSEKKETPK. The span at 156–167 shows a compositional bias: basic residues; sequence KGPRKETRRSRK. Positions 168-188 are enriched in basic and acidic residues; it reads PDKEDKWEREELHMTKLVEER. One can recognise a tr-type G domain in the interval 302-471; it reads PRAPVVTIMG…LLQAEVLELK (170 aa). The tract at residues 311–318 is G1; that stretch reads GHVDHGKT. 311–318 is a GTP binding site; the sequence is GHVDHGKT. The tract at residues 336 to 340 is G2; the sequence is GITQH. The G3 stretch occupies residues 357 to 360; that stretch reads DTPG. GTP-binding positions include 357 to 361 and 411 to 414; these read DTPGH and NKID. A G4 region spans residues 411-414; the sequence is NKID. Residues 447-449 form a G5 region; sequence SAK.

The protein belongs to the TRAFAC class translation factor GTPase superfamily. Classic translation factor GTPase family. IF-2 subfamily.

It localises to the cytoplasm. Its function is as follows. One of the essential components for the initiation of protein synthesis. Protects formylmethionyl-tRNA from spontaneous hydrolysis and promotes its binding to the 30S ribosomal subunits. Also involved in the hydrolysis of GTP during the formation of the 70S ribosomal complex. The protein is Translation initiation factor IF-2 of Coxiella burnetii (strain RSA 493 / Nine Mile phase I).